The following is a 395-amino-acid chain: Selection and upkeep of intraepithelial T-cells protein 7 (395 aa).

A signal peptide spans methionine 1–serine 25. Residues glutamate 26–threonine 141 enclose the Ig-like V-type domain. Residues glutamate 26–serine 248 lie on the Extracellular side of the membrane. Cysteine 49 and cysteine 123 are disulfide-bonded. N-linked (GlcNAc...) asparagine glycosylation is found at asparagine 92 and asparagine 139. In terms of domain architecture, Ig-like C1-type spans alanine 142–isoleucine 233. Cysteines 163 and 217 form a disulfide. A helical transmembrane segment spans residues leucine 249–tryptophan 269. The Cytoplasmic segment spans residues arginine 270 to serine 287. Residues tryptophan 288–proline 308 form a helical membrane-spanning segment. The Extracellular segment spans residues histidine 309–glutamate 329. Residues leucine 330 to isoleucine 350 form a helical membrane-spanning segment. At glutamine 351–lysine 395 the chain is on the cytoplasmic side. The tract at residues proline 371–lysine 395 is disordered.

Belongs to the SKINT family. In terms of tissue distribution, expressed in skin, thymus, testis and, to a lower extent, bladder.

It is found in the membrane. Its function is as follows. May act by engaging a cell surface molecule on immature T-cells in the embryonic thymus. The protein is Selection and upkeep of intraepithelial T-cells protein 7 (Skint7) of Mus musculus (Mouse).